We begin with the raw amino-acid sequence, 321 residues long: MSLQKLMEPEAGTNRTAVAEFILLGLVQTEEMQPVVFVLLLFAYLVTTGGNLSILAAVLVEPKLHAPMYFFLGNLSVLDVGCITVTVPAMLGRLLSHKSTISYDACLSQLFFFHLLAGMDCFLLTAMAYDRLLAICQPLTYSTRMSQTVQRMLVAASWACAFTNALTHTVAMSTLNFCGPNEVNHFYCDLPQLFQLSCSSTQLNELLLFVAAAFMAVAPLVFISVSYAHVVAAVLQIRSAEGRKKAFSTCGSHLTVVGIFYGTGVFSYMRLGSVESSDKDKGVGVFMTVINPMLNPLIYSLRNTDVQGALCQLLVGKRSLT.

Residues 1 to 34 are Extracellular-facing; that stretch reads MSLQKLMEPEAGTNRTAVAEFILLGLVQTEEMQP. Asn-14 carries N-linked (GlcNAc...) asparagine glycosylation. The helical transmembrane segment at 35 to 58 threads the bilayer; that stretch reads VVFVLLLFAYLVTTGGNLSILAAV. Residues 59 to 66 lie on the Cytoplasmic side of the membrane; that stretch reads LVEPKLHA. Residues 67–88 traverse the membrane as a helical segment; sequence PMYFFLGNLSVLDVGCITVTVP. The Extracellular segment spans residues 89 to 109; that stretch reads AMLGRLLSHKSTISYDACLSQ. Cys-106 and Cys-198 are oxidised to a cystine. Residues 110–129 form a helical membrane-spanning segment; the sequence is LFFFHLLAGMDCFLLTAMAY. Over 130 to 149 the chain is Cytoplasmic; that stretch reads DRLLAICQPLTYSTRMSQTV. A helical membrane pass occupies residues 150 to 167; the sequence is QRMLVAASWACAFTNALT. The Extracellular portion of the chain corresponds to 168–205; that stretch reads HTVAMSTLNFCGPNEVNHFYCDLPQLFQLSCSSTQLNE. Residues 206-228 form a helical membrane-spanning segment; it reads LLLFVAAAFMAVAPLVFISVSYA. Over 229–245 the chain is Cytoplasmic; that stretch reads HVVAAVLQIRSAEGRKK. Residues 246–268 form a helical membrane-spanning segment; sequence AFSTCGSHLTVVGIFYGTGVFSY. At 269–281 the chain is on the extracellular side; it reads MRLGSVESSDKDK. The helical transmembrane segment at 282 to 301 threads the bilayer; sequence GVGVFMTVINPMLNPLIYSL. The Cytoplasmic segment spans residues 302-321; the sequence is RNTDVQGALCQLLVGKRSLT.

Belongs to the G-protein coupled receptor 1 family.

It localises to the cell membrane. Its function is as follows. Odorant receptor. The polypeptide is Olfactory receptor 3A3 (OR3A3) (Homo sapiens (Human)).